We begin with the raw amino-acid sequence, 138 residues long: Basic phospholipase A2 chain HDP-2P (138 aa).

Residues methionine 1–glycine 16 form the signal peptide. 7 cysteine pairs are disulfide-bonded: cysteine 42-cysteine 131, cysteine 44-cysteine 60, cysteine 59-cysteine 111, cysteine 65-cysteine 138, cysteine 66-cysteine 104, cysteine 73-cysteine 97, and cysteine 91-cysteine 102. Positions 43, 45, and 47 each coordinate Ca(2+). Histidine 63 is an active-site residue. Aspartate 64 lines the Ca(2+) pocket. Residue aspartate 105 is part of the active site.

Heterodimer of an acidic and a basic chain; non-covalently linked. The toxic basic protein has phospholipase A2 activity (chain HDP-2P) and the non-toxic acidic protein functions as its inhibitor (chain HPD-1I (AC A4VBF0)). It depends on Ca(2+) as a cofactor. Expressed by the venom gland.

The protein localises to the secreted. The enzyme catalyses a 1,2-diacyl-sn-glycero-3-phosphocholine + H2O = a 1-acyl-sn-glycero-3-phosphocholine + a fatty acid + H(+). Enzymatic activity and neurotoxicity are inhibited by Triton X-100. Triton X-100 has been determined to be located in the center of the hydrophobic channel of the enzyme. Monomer: snake venom phospholipase A2 (PLA2) that affects neuromuscular transmission presynaptically. It has catalytic activity, anticoagulant activity and weakly inhibits ADP-induced platelet aggregation. PLA2 catalyzes the calcium-dependent hydrolysis of the 2-acyl groups in 3-sn-phosphoglycerides. In terms of biological role, heterodimer: shows the same activities as the monomer, but with a lower potency. The chain is Basic phospholipase A2 chain HDP-2P from Vipera nikolskii (Nikolsky's adder).